A 249-amino-acid polypeptide reads, in one-letter code: 23S rRNA (guanosine-2'-O-)-methyltransferase RlmB (249 aa).

S-adenosyl-L-methionine-binding residues include Gly200, Ile220, and Leu229.

Belongs to the class IV-like SAM-binding methyltransferase superfamily. RNA methyltransferase TrmH family. RlmB subfamily.

It is found in the cytoplasm. It catalyses the reaction guanosine(2251) in 23S rRNA + S-adenosyl-L-methionine = 2'-O-methylguanosine(2251) in 23S rRNA + S-adenosyl-L-homocysteine + H(+). In terms of biological role, specifically methylates the ribose of guanosine 2251 in 23S rRNA. This Xanthomonas campestris pv. campestris (strain ATCC 33913 / DSM 3586 / NCPPB 528 / LMG 568 / P 25) protein is 23S rRNA (guanosine-2'-O-)-methyltransferase RlmB.